An 88-amino-acid chain; its full sequence is Phage-like element PBSX protein XkdR (88 aa).

This sequence to B.subtilis YqbR.

In Bacillus subtilis (strain 168), this protein is Phage-like element PBSX protein XkdR (xkdR).